Here is a 510-residue protein sequence, read N- to C-terminus: Amidophosphoribosyltransferase (510 aa).

The active-site Nucleophile is the cysteine 2. Residues 2-239 form the Glutamine amidotransferase type-2 domain; it reads CGILGIVLAN…PGEAVIIPKN (238 aa). The Mg(2+) site is built by aspartate 373 and aspartate 374.

This sequence in the C-terminal section; belongs to the purine/pyrimidine phosphoribosyltransferase family. The cofactor is Mg(2+).

The enzyme catalyses 5-phospho-beta-D-ribosylamine + L-glutamate + diphosphate = 5-phospho-alpha-D-ribose 1-diphosphate + L-glutamine + H2O. It functions in the pathway purine metabolism; IMP biosynthesis via de novo pathway; N(1)-(5-phospho-D-ribosyl)glycinamide from 5-phospho-alpha-D-ribose 1-diphosphate: step 1/2. This chain is Amidophosphoribosyltransferase (ADE4), found in Saccharomyces cerevisiae (strain ATCC 204508 / S288c) (Baker's yeast).